Reading from the N-terminus, the 397-residue chain is UPF0261 protein mlr3387 (397 aa).

The protein belongs to the UPF0261 family.

The chain is UPF0261 protein mlr3387 from Mesorhizobium japonicum (strain LMG 29417 / CECT 9101 / MAFF 303099) (Mesorhizobium loti (strain MAFF 303099)).